Here is a 513-residue protein sequence, read N- to C-terminus: Histidine ammonia-lyase (513 aa).

Positions 142–144 (ASG) form a cross-link, 5-imidazolinone (Ala-Gly). At serine 143 the chain carries 2,3-didehydroalanine (Ser).

Belongs to the PAL/histidase family. Contains an active site 4-methylidene-imidazol-5-one (MIO), which is formed autocatalytically by cyclization and dehydration of residues Ala-Ser-Gly.

It is found in the cytoplasm. The enzyme catalyses L-histidine = trans-urocanate + NH4(+). It functions in the pathway amino-acid degradation; L-histidine degradation into L-glutamate; N-formimidoyl-L-glutamate from L-histidine: step 1/3. The polypeptide is Histidine ammonia-lyase (Hyphomonas neptunium (strain ATCC 15444)).